Here is a 127-residue protein sequence, read N- to C-terminus: Fluoride-specific ion channel FluC (127 aa).

Helical transmembrane passes span 4–24, 35–55, 71–91, and 101–121; these read LLCA…WLGM, IGTL…LAWF, TGFC…VFLL, and LNVM…FWLF. Residues glycine 75 and threonine 78 each coordinate Na(+).

This sequence belongs to the fluoride channel Fluc/FEX (TC 1.A.43) family.

The protein localises to the cell inner membrane. It catalyses the reaction fluoride(in) = fluoride(out). Na(+) is not transported, but it plays an essential structural role and its presence is essential for fluoride channel function. Fluoride-specific ion channel. Important for reducing fluoride concentration in the cell, thus reducing its toxicity. The protein is Fluoride-specific ion channel FluC of Klebsiella pneumoniae (strain 342).